The following is a 229-amino-acid chain: uncharacterized protein (229 aa).

7 helical membrane passes run 6 to 26 (LFFV…FLPT), 36 to 56 (LVSV…ILLA), 80 to 99 (SVYD…HRIY), 114 to 134 (VLSV…HLII), 144 to 164 (IFEY…ATML), 174 to 194 (FYYH…IYKF), and 207 to 224 (YVEA…VLSS).

This sequence belongs to the mimivirus L68/R809 family.

The protein localises to the membrane. This is an uncharacterized protein from Acanthamoeba polyphaga (Amoeba).